The sequence spans 473 residues: Anthocyanidin-3-O-glucoside rhamnosyltransferase (473 aa).

The protein belongs to the UDP-glycosyltransferase family. In terms of tissue distribution, expressed in petals, styles and anthers.

It participates in pigment biosynthesis; anthocyanin biosynthesis. Controls the rhamnosylation of reddish anthocyanidin-3-O-glucosides, which is the first step in a series of modifications that finally yield magenta or blue/purple coloured anthocyanins. Controls the conversion of anthocyanidin-3-O-glucosides to anthocyanidin-3-O-rutinosides. This Petunia hybrida (Petunia) protein is Anthocyanidin-3-O-glucoside rhamnosyltransferase.